The sequence spans 272 residues: Phosphoglycolate phosphatase (272 aa).

Catalysis depends on aspartate 19, which acts as the Nucleophile. Mg(2+) is bound by residues aspartate 19, aspartate 21, and aspartate 182.

Belongs to the HAD-like hydrolase superfamily. CbbY/CbbZ/Gph/YieH family. It depends on Mg(2+) as a cofactor.

It carries out the reaction 2-phosphoglycolate + H2O = glycolate + phosphate. Its pathway is organic acid metabolism; glycolate biosynthesis; glycolate from 2-phosphoglycolate: step 1/1. Its function is as follows. Specifically catalyzes the dephosphorylation of 2-phosphoglycolate. Is involved in the dissimilation of the intracellular 2-phosphoglycolate formed during the DNA repair of 3'-phosphoglycolate ends, a major class of DNA lesions induced by oxidative stress. The sequence is that of Phosphoglycolate phosphatase from Pseudomonas syringae pv. tomato (strain ATCC BAA-871 / DC3000).